The sequence spans 512 residues: tRNA modification GTPase gtpbp3, mitochondrial (512 aa).

A TrmE-type G domain is found at 246–434 (GANIAIVGPP…LLNLLKLNLK (189 aa)). Residues 253–260 (GPPNAGKS), 300–304 (DTAGL), and 375–378 (NKSD) contribute to the GTP site.

It belongs to the TRAFAC class TrmE-Era-EngA-EngB-Septin-like GTPase superfamily. TrmE GTPase family.

It is found in the mitochondrion. In terms of biological role, GTPase involved in the 5-carboxymethylaminomethyl modification (mnm(5)s(2)U34) of the wobble uridine base in mitochondrial tRNAs. This chain is tRNA modification GTPase gtpbp3, mitochondrial (gtpbp3), found in Dictyostelium discoideum (Social amoeba).